The chain runs to 132 residues: UPF0060 membrane protein SG1469 (132 aa).

3 consecutive transmembrane segments (helical) span residues 5–25 (VLLY…PYCY), 32–52 (LLLI…VLYP), and 60–80 (AAYG…IDGI).

The protein belongs to the UPF0060 family.

It localises to the cell inner membrane. The polypeptide is UPF0060 membrane protein SG1469 (Sodalis glossinidius (strain morsitans)).